Reading from the N-terminus, the 315-residue chain is CID domain-containing protein 1 (315 aa).

Positions 1-135 (MADFTEQTLR…RLHEVHQQVK (135 aa)) constitute a CID domain. A coiled-coil region spans residues 227–273 (MLEEYVKRLKNETNERETLESNLNMLIENVRMSIEHHEKLCREVKRR).

The polypeptide is CID domain-containing protein 1 (cids-1) (Caenorhabditis elegans).